Here is a 430-residue protein sequence, read N- to C-terminus: Tol-Pal system protein TolB (430 aa).

An N-terminal signal peptide occupies residues 1–21; it reads MKQALRVAFGFLILWASVLHA.

The protein belongs to the TolB family. In terms of assembly, the Tol-Pal system is composed of five core proteins: the inner membrane proteins TolA, TolQ and TolR, the periplasmic protein TolB and the outer membrane protein Pal. They form a network linking the inner and outer membranes and the peptidoglycan layer.

The protein localises to the periplasm. In terms of biological role, part of the Tol-Pal system, which plays a role in outer membrane invagination during cell division and is important for maintaining outer membrane integrity. TolB occupies a key intermediary position in the Tol-Pal system because it communicates directly with both membrane-embedded components, Pal in the outer membrane and TolA in the inner membrane. This chain is Tol-Pal system protein TolB, found in Shigella boydii serotype 18 (strain CDC 3083-94 / BS512).